The following is a 210-amino-acid chain: Troponin I, cardiac muscle (210 aa).

Residues 1–43 (MADGSSDAAREPRPAPAPIRRRSSNYRAYATEPHAKKKSKISA) are disordered. The residue at position 2 (alanine 2) is an N-acetylalanine. Residues serine 5 and serine 6 each carry the phosphoserine modification. Residues serine 23 and serine 24 each carry the phosphoserine; by PKA and PKD/PRKD1 modification. Phosphotyrosine is present on tyrosine 26. Threonine 31 is subject to Phosphothreonine; by STK4/MST1. The interval 32–79 (EPHAKKKSKISASRKLQLKTLLLQIAKQELEREAEERRGEKGRALSTR) is involved in binding TNC. Serine 42 and serine 44 each carry phosphoserine; by PKC/PRKCE. Threonine 51 carries the phosphothreonine; by STK4/MST1 modification. Residue serine 77 is modified to Phosphoserine. Threonine 78 carries the post-translational modification Phosphothreonine. A phosphothreonine; by STK4/MST1 mark is found at threonine 129 and threonine 143. The segment at 129–149 (TQKIFDLRGKFKRPTLRRVRI) is involved in binding TNC and actin. A Phosphoserine; by PAK3 modification is found at serine 150. Serine 166 is subject to Phosphoserine. At threonine 181 the chain carries Phosphothreonine. The residue at position 199 (serine 199) is a Phosphoserine.

The protein belongs to the troponin I family. Binds to actin and tropomyosin. Interacts with TRIM63. Interacts with STK4/MST1. Phosphorylated at Ser-42 and Ser-44 by PRKCE; phosphorylation increases myocardium contractile dysfunction. Phosphorylated at Ser-23 and Ser-24 by PRKD1; phosphorylation reduces myofilament calcium sensitivity. Phosphorylated preferentially at Thr-31. Phosphorylation by STK4/MST1 alters its binding affinity to TNNC1 (cardiac Tn-C) and TNNT2 (cardiac Tn-T).

Its function is as follows. Troponin I is the inhibitory subunit of troponin, the thin filament regulatory complex which confers calcium-sensitivity to striated muscle actomyosin ATPase activity. In Homo sapiens (Human), this protein is Troponin I, cardiac muscle (TNNI3).